The sequence spans 118 residues: MSKGLSLFERRRRRVRTALRARGGLRPRLSVHRSGRHIYAQVIDDEAGRTVASASTLDKDMKGKTGATADAAASVGKAVAERAKAAGVTQVVFDRGGFLFHGRVKALADAAREGGLEF.

This sequence belongs to the universal ribosomal protein uL18 family. Part of the 50S ribosomal subunit; part of the 5S rRNA/L5/L18/L25 subcomplex. Contacts the 5S and 23S rRNAs.

Functionally, this is one of the proteins that bind and probably mediate the attachment of the 5S RNA into the large ribosomal subunit, where it forms part of the central protuberance. The polypeptide is Large ribosomal subunit protein uL18 (Rhizorhabdus wittichii (strain DSM 6014 / CCUG 31198 / JCM 15750 / NBRC 105917 / EY 4224 / RW1) (Sphingomonas wittichii)).